A 516-amino-acid polypeptide reads, in one-letter code: MPPPGKVPRKENLGLQCEWGSCSFVCSAMEEFCEHVTQHLQQHLQGSGEEEEEEEDLLEEEFSCLWRECGFCSPDNSADLIRHVYFHCYHTKLKQWGLQALQSQADLSPCILDFQSRNLIPDIPDHFLCLWEHCENSFDNPEWFYRHVEAHSQCCEYQVVGKDNNVVLCGWKGCTCTFKDRFKLREHLRSHTQEKVVACPTCGGMFANNTKFLDHIRRQSSLDQQHFQCSHCSKRFATERLLRDHMRNHVNHYKCPLCDMTCPLPSSLRNHMRFRHSEARPFKCDCCDYSCKNLIDLRKHLDTHSKEPAYSCDFENCTFSARSLYSIKSHYRKVHEGDSEPRYRCHVCDKCFTRGNNLTVHLRKKHQFKWPSGHPRFRYKEHEDGYMRLQLVRYESVELTQQLLRQPQEGSGLGASLNESSLQDIILETVPGEPGPQEEAEEEGGGGEGIALPASQGTSSPIIHVVNQTNAQGEREVVYYVLFEAPGEPPPASEPPSGGVMGELQGAAEEPEVQMV.

3 consecutive C2H2-type zinc fingers follow at residues 15–39 (LQCE…VTQH), 127–151 (FLCL…VEAH), and 167–191 (VLCG…LRSH). The C2H2-type 4; degenerate zinc finger occupies 197–219 (VACPTCGGMFANNTKFLDHIRRQ). 5 consecutive C2H2-type zinc fingers follow at residues 227–249 (FQCS…MRNH), 253–276 (YKCP…RFRH), 282–304 (FKCD…LDTH), 310–335 (YSCD…RKVH), and 343–366 (YRCH…RKKH). The tract at residues 371–516 (PSGHPRFRYK…AAEEPEVQMV (146 aa)) is interaction with NPAT. The interval 372–405 (SGHPRFRYKEHEDGYMRLQLVRYESVELTQQLLR) is required for activation of histone H4 transcription and contributes to DNA-binding. Disordered stretches follow at residues 429–456 (TVPG…PASQ) and 486–516 (PGEP…VQMV). The span at 436–445 (PQEEAEEEGG) shows a compositional bias: acidic residues.

Binds MBD2 and a histone deacetylase complex. Interacts with NPAT. In terms of processing, ubiquitinated. Ubiquitination may lead to proteasome-mediated degradation.

It is found in the nucleus. Its function is as follows. Transcriptional repressor that binds to the consensus sequence 5'-CGGACGTT-3' and to the RB1 promoter. Transcriptional activator that promotes histone H4 gene transcription at the G1/S phase transition in conjunction with NPAT. Also activates transcription of the ATM and PRKDC genes. Autoregulates its expression by associating with its own promoter. The sequence is that of Histone H4 transcription factor (HINFP) from Bos taurus (Bovine).